The following is a 272-amino-acid chain: ATP phosphoribosyltransferase regulatory subunit (272 aa).

It belongs to the class-II aminoacyl-tRNA synthetase family. HisZ subfamily. Heteromultimer composed of HisG and HisZ subunits.

The protein localises to the cytoplasm. Its pathway is amino-acid biosynthesis; L-histidine biosynthesis; L-histidine from 5-phospho-alpha-D-ribose 1-diphosphate: step 1/9. Its function is as follows. Required for the first step of histidine biosynthesis. May allow the feedback regulation of ATP phosphoribosyltransferase activity by histidine. In Staphylococcus aureus (strain MRSA252), this protein is ATP phosphoribosyltransferase regulatory subunit.